The sequence spans 381 residues: UDP-N-acetylglucosamine--N-acetylmuramyl-(pentapeptide) pyrophosphoryl-undecaprenol N-acetylglucosamine transferase (381 aa).

UDP-N-acetyl-alpha-D-glucosamine-binding positions include 10–12 (TGG), N124, R165, S207, I263, and Q308.

Belongs to the glycosyltransferase 28 family. MurG subfamily.

The protein localises to the cell inner membrane. It carries out the reaction di-trans,octa-cis-undecaprenyl diphospho-N-acetyl-alpha-D-muramoyl-L-alanyl-D-glutamyl-meso-2,6-diaminopimeloyl-D-alanyl-D-alanine + UDP-N-acetyl-alpha-D-glucosamine = di-trans,octa-cis-undecaprenyl diphospho-[N-acetyl-alpha-D-glucosaminyl-(1-&gt;4)]-N-acetyl-alpha-D-muramoyl-L-alanyl-D-glutamyl-meso-2,6-diaminopimeloyl-D-alanyl-D-alanine + UDP + H(+). The protein operates within cell wall biogenesis; peptidoglycan biosynthesis. Its function is as follows. Cell wall formation. Catalyzes the transfer of a GlcNAc subunit on undecaprenyl-pyrophosphoryl-MurNAc-pentapeptide (lipid intermediate I) to form undecaprenyl-pyrophosphoryl-MurNAc-(pentapeptide)GlcNAc (lipid intermediate II). The sequence is that of UDP-N-acetylglucosamine--N-acetylmuramyl-(pentapeptide) pyrophosphoryl-undecaprenol N-acetylglucosamine transferase from Trichlorobacter lovleyi (strain ATCC BAA-1151 / DSM 17278 / SZ) (Geobacter lovleyi).